Consider the following 57-residue polypeptide: Putative antitoxin VapB4 (57 aa).

Possibly the antitoxin component of a type II toxin-antitoxin (TA) system. Its cognate toxin is VapC4 (Potential). The polypeptide is Putative antitoxin VapB4 (vapB4) (Methanocaldococcus jannaschii (strain ATCC 43067 / DSM 2661 / JAL-1 / JCM 10045 / NBRC 100440) (Methanococcus jannaschii)).